Consider the following 503-residue polypeptide: Maturase K (503 aa).

This sequence belongs to the intron maturase 2 family. MatK subfamily.

It localises to the plastid. Its subcellular location is the chloroplast. Functionally, usually encoded in the trnK tRNA gene intron. Probably assists in splicing its own and other chloroplast group II introns. This is Maturase K from Rosa foetida (Austrian briar).